The chain runs to 122 residues: Small ribosomal subunit protein uS13 (122 aa).

The tract at residues 95–122 (GLPVRGQRTKTNARTRKGPKKTIAGKKK) is disordered.

Belongs to the universal ribosomal protein uS13 family. Part of the 30S ribosomal subunit. Forms a loose heterodimer with protein S19. Forms two bridges to the 50S subunit in the 70S ribosome.

Its function is as follows. Located at the top of the head of the 30S subunit, it contacts several helices of the 16S rRNA. In the 70S ribosome it contacts the 23S rRNA (bridge B1a) and protein L5 of the 50S subunit (bridge B1b), connecting the 2 subunits; these bridges are implicated in subunit movement. Contacts the tRNAs in the A and P-sites. This is Small ribosomal subunit protein uS13 from Corynebacterium glutamicum (strain ATCC 13032 / DSM 20300 / JCM 1318 / BCRC 11384 / CCUG 27702 / LMG 3730 / NBRC 12168 / NCIMB 10025 / NRRL B-2784 / 534).